Reading from the N-terminus, the 224-residue chain is Peroxiredoxin-6 (224 aa).

The Thioredoxin domain maps to 5 to 169; sequence LLLGDEAPNF…ILRVIISLQL (165 aa). The required and sufficient for targeting to lysosomes and lamellar bodies stretch occupies residues 31–40; that stretch reads DSWGILFSHP. Threonine 44 carries the post-translational modification Phosphothreonine. The Cysteine sulfenic acid (-SOH) intermediate; for peroxidase activity role is filled by cysteine 47. Lysine 63 is modified (N6-acetyllysine). Tyrosine 89 bears the Phosphotyrosine mark. Residue aspartate 140 is the For phospholipase activity of the active site. The residue at position 177 (threonine 177) is a Phosphothreonine; by MAPK. The residue at position 209 (lysine 209) is an N6-acetyllysine; alternate. The residue at position 209 (lysine 209) is an N6-succinyllysine; alternate.

The protein belongs to the peroxiredoxin family. Prx6 subfamily. Homodimer. Interacts with GSTP1; mediates PRDX6 glutathionylation and regeneration. Interacts with APEX1. Interacts with STH. May interact with FAM168B. May interact with HTR2A. Does not need Ca(2+) as cofactor. is required as a cofactor. Irreversibly inactivated by overoxidation of Cys-47 to sulfinic acid (Cys-SO(2)H) and sulfonic acid (Cys-SO(3)H) forms upon oxidative stress. Post-translationally, phosphorylation at Thr-177 by MAP kinases increases the phospholipase activity of the enzyme. The phosphorylated form exhibits a greater lysophosphatidylcholine acyltransferase activity compared to the non-phosphorylated form.

The protein localises to the cytoplasm. It localises to the lysosome. The catalysed reaction is a hydroperoxide + 2 glutathione = an alcohol + glutathione disulfide + H2O. It catalyses the reaction a 1,2-diacyl-sn-glycero-3-phosphocholine + H2O = a 1-acyl-sn-glycero-3-phosphocholine + a fatty acid + H(+). The enzyme catalyses a 1-acyl-sn-glycero-3-phosphocholine + an acyl-CoA = a 1,2-diacyl-sn-glycero-3-phosphocholine + CoA. It carries out the reaction 1-hexadecanoyl-sn-glycero-3-phosphocholine + hexadecanoyl-CoA = 1,2-dihexadecanoyl-sn-glycero-3-phosphocholine + CoA. The catalysed reaction is 1,2-dihexadecanoyl-sn-glycero-3-phosphocholine + H2O = 1-hexadecanoyl-sn-glycero-3-phosphocholine + hexadecanoate + H(+). In terms of biological role, thiol-specific peroxidase that catalyzes the reduction of hydrogen peroxide and organic hydroperoxides to water and alcohols, respectively. Can reduce H(2)O(2) and short chain organic, fatty acid, and phospholipid hydroperoxides. Also has phospholipase activity, and can therefore either reduce the oxidized sn-2 fatty acyl group of phospholipids (peroxidase activity) or hydrolyze the sn-2 ester bond of phospholipids (phospholipase activity). These activities are dependent on binding to phospholipids at acidic pH and to oxidized phospholipds at cytosolic pH. Plays a role in cell protection against oxidative stress by detoxifying peroxides and in phospholipid homeostasis. Exhibits acyl-CoA-dependent lysophospholipid acyltransferase which mediates the conversion of lysophosphatidylcholine (1-acyl-sn-glycero-3-phosphocholine or LPC) into phosphatidylcholine (1,2-diacyl-sn-glycero-3-phosphocholine or PC). Shows a clear preference for LPC as the lysophospholipid and for palmitoyl CoA as the fatty acyl substrate. This Bos taurus (Bovine) protein is Peroxiredoxin-6 (PRDX6).